The primary structure comprises 300 residues: Porphobilinogen deaminase (300 aa).

Residue Cys-239 is modified to S-(dipyrrolylmethanemethyl)cysteine.

This sequence belongs to the HMBS family. As to quaternary structure, monomer. The cofactor is dipyrromethane.

The catalysed reaction is 4 porphobilinogen + H2O = hydroxymethylbilane + 4 NH4(+). The protein operates within porphyrin-containing compound metabolism; protoporphyrin-IX biosynthesis; coproporphyrinogen-III from 5-aminolevulinate: step 2/4. In terms of biological role, tetrapolymerization of the monopyrrole PBG into the hydroxymethylbilane pre-uroporphyrinogen in several discrete steps. This is Porphobilinogen deaminase from Francisella tularensis subsp. holarctica (strain OSU18).